A 398-amino-acid polypeptide reads, in one-letter code: Phosphoglycerate kinase (398 aa).

Substrate contacts are provided by residues 21–23 (DFN), Arg-36, 59–62 (HFGR), Arg-117, and Arg-150. Residues Lys-200, Glu-321, and 351–354 (GGDS) contribute to the ATP site.

Belongs to the phosphoglycerate kinase family. In terms of assembly, monomer.

It is found in the cytoplasm. It catalyses the reaction (2R)-3-phosphoglycerate + ATP = (2R)-3-phospho-glyceroyl phosphate + ADP. It functions in the pathway carbohydrate degradation; glycolysis; pyruvate from D-glyceraldehyde 3-phosphate: step 2/5. This Wolbachia sp. subsp. Drosophila simulans (strain wRi) protein is Phosphoglycerate kinase.